We begin with the raw amino-acid sequence, 344 residues long: Cysteine proteinase 5 (344 aa).

The first 17 residues, 1 to 17, serve as a signal peptide directing secretion; that stretch reads MKVLSFLCVLLVSVATA. Residues 18–111 constitute a propeptide, activation peptide; that stretch reads KQQFSELQYR…TQEEKVFTTS (94 aa). Cystine bridges form between Cys133/Cys174, Cys167/Cys207, and Cys265/Cys333. Cys136 is a catalytic residue. Residue His272 is part of the active site. Asn297 is a glycosylation site (N-linked (GlcNAc...) asparagine). Asn311 is a catalytic residue.

Belongs to the peptidase C1 family. Post-translationally, glycosylated; contains GlcNAc-alpha-1-P-Ser residues.

It is found in the lysosome. The chain is Cysteine proteinase 5 (cprE) from Dictyostelium discoideum (Social amoeba).